The chain runs to 727 residues: NADH-ubiquinone oxidoreductase 75 kDa subunit, mitochondrial (727 aa).

The N-terminal 23 residues, 1 to 23 (MLRIPVRKALVGLSKSSKGCVRT), are a transit peptide targeting the mitochondrion. The 79-residue stretch at 30 to 108 (NLIEVFVDGQ…GWNILTNSEK (79 aa)) folds into the 2Fe-2S ferredoxin-type domain. [2Fe-2S] cluster contacts are provided by cysteine 64, cysteine 75, and cysteine 78. An N6-acetyllysine modification is found at lysine 84. Cysteine 92 lines the [2Fe-2S] cluster pocket. Positions 108 to 147 (KTKKAREGVMEFLLANHPLDCPICDQGGECDLQDQSMMFG) constitute a 4Fe-4S His(Cys)3-ligated-type domain. The [4Fe-4S] cluster site is built by histidine 124, cysteine 128, cysteine 131, cysteine 137, cysteine 176, cysteine 179, cysteine 182, and cysteine 226. One can recognise a 4Fe-4S Mo/W bis-MGD-type domain in the interval 245 to 301 (TRKTESIDVMDAVGSNIVVSTRTGEVMRILPRMHEDINEEWISDKTRFAYDGLKRQR). N6-acetyllysine occurs at positions 499 and 709.

This sequence belongs to the complex I 75 kDa subunit family. As to quaternary structure, core subunit of respiratory chain NADH dehydrogenase (Complex I) which is composed of 45 different subunits. This is the largest subunit of complex I and it is a component of the iron-sulfur (IP) fragment of the enzyme. Complex I associates with ubiquinol-cytochrome reductase complex (Complex III) to form supercomplexes. Interacts with MDM2 and AKAP1. [2Fe-2S] cluster serves as cofactor. It depends on [4Fe-4S] cluster as a cofactor.

Its subcellular location is the mitochondrion inner membrane. It catalyses the reaction a ubiquinone + NADH + 5 H(+)(in) = a ubiquinol + NAD(+) + 4 H(+)(out). Its function is as follows. Core subunit of the mitochondrial membrane respiratory chain NADH dehydrogenase (Complex I) which catalyzes electron transfer from NADH through the respiratory chain, using ubiquinone as an electron acceptor. Essential for catalysing the entry and efficient transfer of electrons within complex I. Plays a key role in the assembly and stability of complex I and participates in the association of complex I with ubiquinol-cytochrome reductase complex (Complex III) to form supercomplexes. This is NADH-ubiquinone oxidoreductase 75 kDa subunit, mitochondrial (NDUFS1) from Bos taurus (Bovine).